The primary structure comprises 358 residues: DnaJ homolog subfamily B member 11 (358 aa).

An N-terminal signal peptide occupies residues 1 to 22; that stretch reads MAPQNLSTFCLLLLYLIGAVIA. In terms of domain architecture, J spans 25 to 90; it reads DFYKILGVPR…EKRKQYDTYG (66 aa). Thr-188 carries the post-translational modification Phosphothreonine. N-linked (GlcNAc...) asparagine glycosylation is present at Asn-261.

As to quaternary structure, part of a large chaperone multiprotein complex comprising DNAJB11, HSP90B1, HSPA5, HYOU, PDIA2, PDIA4, PDIA6, PPIB, SDF2L1, UGGT1 and very small amounts of ERP29, but not, or at very low levels, CALR nor CANX. Binds to denatured substrates in an ATP-independent manner. Interacts via the J domain with HSPA5 in an ATP-dependent manner. In terms of processing, contains high-mannose Endo H-sensitive carbohydrates. Cys-169, Cys-171, Cys-193 and Cys-196 form intramolecular disulfide bonds. The preferential partner for each Cys is not known.

It is found in the endoplasmic reticulum lumen. Functionally, as a co-chaperone for HSPA5 it is required for proper folding, trafficking or degradation of proteins. Binds directly to both unfolded proteins that are substrates for ERAD and nascent unfolded peptide chains, but dissociates from the HSPA5-unfolded protein complex before folding is completed. May help recruiting HSPA5 and other chaperones to the substrate. Stimulates HSPA5 ATPase activity. It is necessary for maturation and correct trafficking of PKD1. The protein is DnaJ homolog subfamily B member 11 (Dnajb11) of Rattus norvegicus (Rat).